Consider the following 1454-residue polypeptide: E3 ubiquitin-protein ligase substrate receptor MMS22 (1454 aa).

The interval 159–178 (NSSVQSQRYDSDEEIPKKRH) is disordered. The segment at 1201–1454 (YDEGDISRNF…SEPFKTFKNT (254 aa)) is required for interaction with MMS1.

Belongs to the MMS22 family. In terms of assembly, component of a cullin-RING ligase (CRL) composed of 4 subunits: the RING protein HRT1, the cullin RTT101, a linker protein MMS1, and the substrate receptor MMS22. This complex further interacts with RTT107 and CTF4 to form RTT101-MMS1-MMS22-RTT107 and RTT101-MMS1-MMS22-CTF4 complexes respectively. Interacts (via C-ter) with MMS1 (via N-ter). Interacts with RTT107.

The protein resides in the nucleus. Functionally, substrate targeting component of a cullin-RING-based E3 ubiquitin-protein ligase complex RTT101(MMS1-MMS22). RTT101(MMS1-MMS22) promotes fork progression through damaged DNA or natural pause sites by stabilizing replication proteins like the replication fork-pausing complex (FPC) and leading-strand polymerase at stalled replication forks. RTT101(MMS1-MMS22) ubiquitinates the acetylated histones H3K56ac-H4 at lysine residues H3K121, H3K122 and H3K125. Ubiquitination is required for efficient histone deposition during replication-coupled nucleosome assembly, probably by facilitating the transfer of H3-H4 from ASF1 to other chaperones involved in histone deposition. The protein is E3 ubiquitin-protein ligase substrate receptor MMS22 (MMS22) of Saccharomyces cerevisiae (strain ATCC 204508 / S288c) (Baker's yeast).